The following is a 533-amino-acid chain: Acid-sensing ion channel 2 (533 aa).

Over residues 1–16 (MDLKEACGSEASRETE) the composition is skewed to basic and acidic residues. A disordered region spans residues 1–23 (MDLKEACGSEASRETESGGMGSL). Over 1 to 68 (MDLKEACGSE…STSRRLLWSA (68 aa)) the chain is Cytoplasmic. The chain crosses the membrane as a helical span at residues 69–89 (ALLASLVLLVLESTERLAYFL). At 90-445 (SYPHVTSVDA…ETIEQKKAYE (356 aa)) the chain is on the extracellular side. Intrachain disulfides connect cysteine 113/cysteine 214, cysteine 310/cysteine 385, cysteine 328/cysteine 381, cysteine 332/cysteine 379, cysteine 341/cysteine 363, and cysteine 343/cysteine 355. Asparagine 163 carries an N-linked (GlcNAc...) asparagine glycan. Asparagine 386 and asparagine 413 each carry an N-linked (GlcNAc...) asparagine glycan. Residues 446–466 (VAGLLGDIGGQMGLFIGASIL) traverse the membrane as a helical segment. The GAS motif; ion selectivity filter motif lies at 462–464 (GAS). Over 467–533 (TLLELFDYAY…TLGTLEEIAC (67 aa)) the chain is Cytoplasmic.

It belongs to the amiloride-sensitive sodium channel (TC 1.A.6) family. ASIC2 subfamily. In terms of assembly, can form homotrimers; probably non-functional. Heterotrimer; could form functional heterotrimers producing channel with specific properties depending on their composition. Expressed in central nervous system.

The protein resides in the cell membrane. It catalyses the reaction Na(+)(in) = Na(+)(out). Inhibited by the diuretic drug amiloride. Could form pH-gated heterotrimeric sodium channels that act as postsynaptic excitatory sensors in the nervous system, generating rapid, transient inward currents that fully desensitize upon extracellular acidification. The polypeptide is Acid-sensing ion channel 2 (asic2) (Danio rerio (Zebrafish)).